Here is a 270-residue protein sequence, read N- to C-terminus: Phosphatidylglycerol--prolipoprotein diacylglyceryl transferase (270 aa).

The next 4 helical transmembrane spans lie at 19-39, 53-73, 92-112, and 117-137; these read FPVYWYGIIIGTGVLLGLWLA, FVDLVLFAVPIAIICARAYYV, QGGLAIHGGLIGAVMTGIIYA, and ISFWKLADIAAPSILLGQAIG. Arg138 contributes to the a 1,2-diacyl-sn-glycero-3-phospho-(1'-sn-glycerol) binding site. The next 3 helical transmembrane spans lie at 178-198, 206-226, and 236-256; these read HPTFLYESLWSFAGVILLLLL, GELFFTYLIWYSIGRFFVEEL, and LRIAQVMSIGLIVISIIFIIV.

It belongs to the Lgt family.

The protein resides in the cell membrane. The enzyme catalyses L-cysteinyl-[prolipoprotein] + a 1,2-diacyl-sn-glycero-3-phospho-(1'-sn-glycerol) = an S-1,2-diacyl-sn-glyceryl-L-cysteinyl-[prolipoprotein] + sn-glycerol 1-phosphate + H(+). It functions in the pathway protein modification; lipoprotein biosynthesis (diacylglyceryl transfer). Catalyzes the transfer of the diacylglyceryl group from phosphatidylglycerol to the sulfhydryl group of the N-terminal cysteine of a prolipoprotein, the first step in the formation of mature lipoproteins. The sequence is that of Phosphatidylglycerol--prolipoprotein diacylglyceryl transferase from Bacillus cytotoxicus (strain DSM 22905 / CIP 110041 / 391-98 / NVH 391-98).